Reading from the N-terminus, the 1016-residue chain is Calmodulin-binding transcription activator 4 (1016 aa).

A DNA-binding region (CG-1) is located at residues 38 to 164; that stretch reads ISTLYQEAHS…YRDVSEREEG (127 aa). A disordered region spans residues 324–343; it reads KNGSGPSGGTGGSGDQGSES. The span at 328-338 shows a compositional bias: gly residues; that stretch reads GPSGGTGGSGD. 3 ANK repeats span residues 647–676, 680–709, and 719–748; these read QEQG…NVDF, KGWS…SAGA, and NGKT…TNHL. Residues 753 to 786 are disordered; the sequence is LEETENSKDTAQVQTEKTLNSISEQSPSGNEDQV. Positions 761–785 are enriched in polar residues; it reads DTAQVQTEKTLNSISEQSPSGNEDQ. 3 consecutive IQ domains span residues 798 to 827, 855 to 884, and 878 to 907; these read AAQA…LVAC, YNSA…KVVK, and LRQK…AVRI. The tract at residues 903 to 925 is calmodulin-binding; sequence WAVRILDKVVLRWRRKGVGLRGF. Residues Ser935 and Ser962 each carry the phosphoserine modification.

This sequence belongs to the CAMTA family. As to expression, expressed in roots, stems, leaves, flowers and siliques.

Its subcellular location is the nucleus. Transcription activator that binds to the DNA consensus sequence 5'-[ACG]CGCG[GTC]-3'. Regulates transcriptional activity in response to calcium signals. Binds calmodulin in a calcium-dependent manner. Involved together with CAMTA2 and CAMTA3 in the positive regulation of a general stress response. The polypeptide is Calmodulin-binding transcription activator 4 (Arabidopsis thaliana (Mouse-ear cress)).